The sequence spans 519 residues: Glycogen synthase (519 aa).

A disordered region spans residues 1-40; it reads MISAAVEPHVDAFKPDNREPLTPDFATTGKAPGAQRQHNP. The segment covering 8 to 21 has biased composition (basic and acidic residues); it reads PHVDAFKPDNREPL. Lysine 57 is an ADP-alpha-D-glucose binding site.

This sequence belongs to the glycosyltransferase 1 family. Bacterial/plant glycogen synthase subfamily.

It catalyses the reaction [(1-&gt;4)-alpha-D-glucosyl](n) + ADP-alpha-D-glucose = [(1-&gt;4)-alpha-D-glucosyl](n+1) + ADP + H(+). It participates in glycan biosynthesis; glycogen biosynthesis. Functionally, synthesizes alpha-1,4-glucan chains using ADP-glucose. The sequence is that of Glycogen synthase from Pseudomonas putida (strain ATCC 47054 / DSM 6125 / CFBP 8728 / NCIMB 11950 / KT2440).